A 456-amino-acid polypeptide reads, in one-letter code: Zinc finger C2HC domain-containing protein 1C (456 aa).

2 disordered regions span residues 16–46 and 85–113; these read MLPH…QSLK and YPHC…SSGP. 2 stretches are compositionally biased toward polar residues: residues 35-46 and 90-102; these read YEQGDSSQQSLK and GISQ…DSQG. Positions 211–265 form a coiled coil; that stretch reads VQIRRLEAAGESLEEEIRRKQILLRGKLKKTEEELRRIQTQKEQAKENENGELQK. A disordered region spans residues 336 to 388; it reads NKIRDPVSEPSVEKFSPPSETPVGALQGSARNSSLSMAPDSSGSSGSIEEPQL. Low complexity predominate over residues 368-382; it reads SSLSMAPDSSGSSGS. Residues 387–416 form a C2HC/C3H-type zinc finger; it reads QLGECSHCGRKFLSFRLERHSNICSRMRGS. Residues cysteine 391, cysteine 394, histidine 406, and cysteine 410 each coordinate Zn(2+).

This sequence belongs to the ZC2HC1 family. It depends on Zn(2+) as a cofactor.

This Homo sapiens (Human) protein is Zinc finger C2HC domain-containing protein 1C (ZC2HC1C).